The following is an 844-amino-acid chain: Protein translocase subunit SecA 1 (844 aa).

ATP is bound by residues Gln-91, 109-113, and Asp-498; that span reads GEGKT. Residues 793 to 813 show a composition bias toward basic and acidic residues; sequence KSKSFGEAKHVTAEDGKEKAK. The tract at residues 793–825 is disordered; sequence KSKSFGEAKHVTAEDGKEKAKPQPIVKGDQVGR. Residues Cys-829, Cys-831, Cys-840, and His-841 each coordinate Zn(2+).

This sequence belongs to the SecA family. Monomer and homodimer. Part of the essential Sec protein translocation apparatus which comprises SecA, SecYEG and auxiliary proteins SecDF. Other proteins may also be involved. Requires Zn(2+) as cofactor.

Its subcellular location is the cell membrane. The protein resides in the cytoplasm. The enzyme catalyses ATP + H2O + cellular proteinSide 1 = ADP + phosphate + cellular proteinSide 2.. Functionally, part of the Sec protein translocase complex. Interacts with the SecYEG preprotein conducting channel. Has a central role in coupling the hydrolysis of ATP to the transfer of proteins into and across the cell membrane, serving as an ATP-driven molecular motor driving the stepwise translocation of polypeptide chains across the membrane. This Staphylococcus epidermidis (strain ATCC 35984 / DSM 28319 / BCRC 17069 / CCUG 31568 / BM 3577 / RP62A) protein is Protein translocase subunit SecA 1.